The chain runs to 394 residues: Phosphoglycerate kinase (394 aa).

Substrate is bound by residues 21 to 23 (DFN), R36, 59 to 62 (HLGR), R118, and R151. At S183 the chain carries Phosphoserine. An ATP-binding site is contributed by K201. Residue T299 is modified to Phosphothreonine. ATP-binding positions include E323 and 350–353 (GGDS).

This sequence belongs to the phosphoglycerate kinase family. In terms of assembly, monomer.

Its subcellular location is the cytoplasm. The enzyme catalyses (2R)-3-phosphoglycerate + ATP = (2R)-3-phospho-glyceroyl phosphate + ADP. The protein operates within carbohydrate degradation; glycolysis; pyruvate from D-glyceraldehyde 3-phosphate: step 2/5. The chain is Phosphoglycerate kinase from Shouchella clausii (strain KSM-K16) (Alkalihalobacillus clausii).